Reading from the N-terminus, the 281-residue chain is Pantothenate synthetase (281 aa).

30–37 (MGYLHEGH) serves as a coordination point for ATP. His-37 serves as the catalytic Proton donor. Position 61 (Gln-61) interacts with (R)-pantoate. Gln-61 is a binding site for beta-alanine. 147–150 (GEKD) serves as a coordination point for ATP. Position 153 (Gln-153) interacts with (R)-pantoate. ATP is bound by residues Ile-176 and 184 to 187 (KSSR).

It belongs to the pantothenate synthetase family. In terms of assembly, homodimer.

The protein resides in the cytoplasm. The catalysed reaction is (R)-pantoate + beta-alanine + ATP = (R)-pantothenate + AMP + diphosphate + H(+). It participates in cofactor biosynthesis; (R)-pantothenate biosynthesis; (R)-pantothenate from (R)-pantoate and beta-alanine: step 1/1. In terms of biological role, catalyzes the condensation of pantoate with beta-alanine in an ATP-dependent reaction via a pantoyl-adenylate intermediate. In Clostridium botulinum (strain ATCC 19397 / Type A), this protein is Pantothenate synthetase.